The following is a 218-amino-acid chain: uncharacterized protein (218 aa).

This is an uncharacterized protein from Acholeplasma phage L2 (Bacteriophage L2).